A 914-amino-acid polypeptide reads, in one-letter code: Linoleate 13S-lipoxygenase 3-1, chloroplastic (914 aa).

A chloroplast-targeting transit peptide spans 1–83 (MALAKEIMGI…PEKAVRFKVR (83 aa)). Residues 96–218 (LKETIVKHLD…DHPGKRIFFS (123 aa)) enclose the PLAT domain. The Lipoxygenase domain occupies 221-914 (PYLPDETPAG…CRGVPNSVSI (694 aa)). 5 residues coordinate Fe cation: H574, H579, H765, N769, and I914.

Belongs to the lipoxygenase family. As to quaternary structure, monomer. Fe cation is required as a cofactor. As to expression, expressed in roots and leaves. Detected in tubers and flower buds.

Its subcellular location is the plastid. The protein localises to the chloroplast stroma. The protein resides in the chloroplast thylakoid. It carries out the reaction (9Z,12Z)-octadecadienoate + O2 = (13S)-hydroperoxy-(9Z,11E)-octadecadienoate. It catalyses the reaction (9Z,12Z,15Z)-octadecatrienoate + O2 = (13S)-hydroperoxy-(9Z,11E,15Z)-octadecatrienoate. It participates in lipid metabolism; oxylipin biosynthesis. Its function is as follows. Plant lipoxygenases may be involved in a number of diverse aspects of plant physiology including growth and development, pest resistance, and senescence or responses to wounding. Required for the regulation of wound-induced gene expression, but is not involved in the bulk production of jasmonate upon wounding. Catalyzes the hydroperoxidation of lipids containing a cis,cis-1,4-pentadiene structure. Linolenic acid is the preferred substrate, before linoleic and arachidonic acids. This Solanum tuberosum (Potato) protein is Linoleate 13S-lipoxygenase 3-1, chloroplastic (LOX3.1).